The chain runs to 42 residues: Protein MGF 360-20R (42 aa).

It belongs to the asfivirus MGF 360 family.

Functionally, plays a role in virus cell tropism, and may be required for efficient virus replication in macrophages. The sequence is that of Protein MGF 360-20R from African swine fever virus (strain Badajoz 1971 Vero-adapted) (Ba71V).